Here is a 637-residue protein sequence, read N- to C-terminus: Conglutin beta 5 (637 aa).

Positions 1-30 (MAKMRVRFPMLVLLLGVVFLLAVSIGIAYG) are cleaved as a signal peptide. Basic and acidic residues-rich tracts occupy residues 33–105 (DVIK…REQE), 136–174 (RREEREQEQGSSSESRRQSGDERRHRHEKREQREEREQE), and 184–203 (DYGRRQRHEGREQREEREQE). Disordered stretches follow at residues 33-221 (DVIK…YFSS) and 384-439 (EQED…LRSN). In terms of domain architecture, Cupin type-1 1 spans 217–375 (YYFSSERFQT…TFNTHYEEIQ (159 aa)). Over residues 389–417 (EQRREQEQSHQDEGVIVRVSKEQIQELRK) the composition is skewed to basic and acidic residues. In terms of domain architecture, Cupin type-1 2 spans 434–594 (FNLRSNEPIY…IFPGSAEDVE (161 aa)). The N-linked (GlcNAc...) asparagine glycan is linked to asparagine 544. The segment covering 606–615 (ANAQPQQQQQ) has biased composition (low complexity). The segment at 606–626 (ANAQPQQQQQQREKEGRRGRR) is disordered.

It belongs to the 7S seed storage protein family. In terms of assembly, component of globulins complexes which accumulate in seeds.

Functionally, seed storage protein. Accumulates during seed development and is hydrolyzed after germination to provide a carbon and nitrogen source for the developing seedling. In Lupinus angustifolius (Narrow-leaved blue lupine), this protein is Conglutin beta 5.